The primary structure comprises 1117 residues: Isoleucine--tRNA ligase (1117 aa).

The 'HIGH' region signature appears at 64–74 (PFANGLPHYGH). The short motif at 647-651 (KLSKR) is the 'KMSKS' region element. Residue Lys650 participates in ATP binding.

This sequence belongs to the class-I aminoacyl-tRNA synthetase family. IleS type 2 subfamily. In terms of assembly, monomer. It depends on Zn(2+) as a cofactor.

Its subcellular location is the cytoplasm. It catalyses the reaction tRNA(Ile) + L-isoleucine + ATP = L-isoleucyl-tRNA(Ile) + AMP + diphosphate. Functionally, catalyzes the attachment of isoleucine to tRNA(Ile). As IleRS can inadvertently accommodate and process structurally similar amino acids such as valine, to avoid such errors it has two additional distinct tRNA(Ile)-dependent editing activities. One activity is designated as 'pretransfer' editing and involves the hydrolysis of activated Val-AMP. The other activity is designated 'posttransfer' editing and involves deacylation of mischarged Val-tRNA(Ile). The protein is Isoleucine--tRNA ligase of Ehrlichia ruminantium (strain Welgevonden).